The sequence spans 282 residues: Putative quercetin 2,3-dioxygenase VC_A0969 (282 aa).

The disordered stretch occupies residues 1 to 21; sequence MTKDREIRQTVPAQPTSDGDG. His59, His61, His103, and Glu105 together coordinate a divalent metal cation.

Belongs to the pirin family. A divalent metal cation serves as cofactor.

The catalysed reaction is quercetin + O2 = 2-(3,4-dihydroxybenzoyloxy)-4,6-dihydroxybenzoate + CO. It functions in the pathway flavonoid metabolism; quercetin degradation. Functionally, putative quercetin 2,3-dioxygenase. This Vibrio cholerae serotype O1 (strain ATCC 39315 / El Tor Inaba N16961) protein is Putative quercetin 2,3-dioxygenase VC_A0969.